The primary structure comprises 150 residues: Ribosome maturation factor RimP (150 aa).

It belongs to the RimP family.

Its subcellular location is the cytoplasm. Required for maturation of 30S ribosomal subunits. This is Ribosome maturation factor RimP from Escherichia coli O9:H4 (strain HS).